Consider the following 356-residue polypeptide: uncharacterized protein (356 aa).

Transmembrane regions (helical) follow at residues 2–22, 35–55, 76–96, 99–119, 124–144, and 152–172; these read IESI…FHRL, GYVT…PIPF, NMGY…FAFG, LLYG…GPFL, IVAL…LSIF, and EIAF…ITFV. One can recognise a GGDEF domain in the interval 218-353; it reads ESLALLLIDI…GRNQVMFNPI (136 aa).

The protein localises to the cell membrane. This is an uncharacterized protein from Staphylococcus haemolyticus (strain JCSC1435).